A 91-amino-acid chain; its full sequence is MWPVLWAAARTYAPYITFPVAFVVGAVGYQLEWFIRGTPGHPVEEQSILEKREERTLQETMGKDVTQVISLKEKLEFTPKAVLNRNRQEKS.

A helical membrane pass occupies residues 12 to 34; that stretch reads YAPYITFPVAFVVGAVGYQLEWF.

Belongs to the SMIM12 family.

Its subcellular location is the membrane. The sequence is that of Small integral membrane protein 12-B (smim12-b) from Xenopus laevis (African clawed frog).